Here is a 275-residue protein sequence, read N- to C-terminus: 4-diphosphocytidyl-2-C-methyl-D-erythritol kinase (275 aa).

Lys14 is an active-site residue. Residue 98-108 (PMGAGLGGGSS) coordinates ATP. The active site involves Asp140.

The protein belongs to the GHMP kinase family. IspE subfamily.

The catalysed reaction is 4-CDP-2-C-methyl-D-erythritol + ATP = 4-CDP-2-C-methyl-D-erythritol 2-phosphate + ADP + H(+). Its pathway is isoprenoid biosynthesis; isopentenyl diphosphate biosynthesis via DXP pathway; isopentenyl diphosphate from 1-deoxy-D-xylulose 5-phosphate: step 3/6. Its function is as follows. Catalyzes the phosphorylation of the position 2 hydroxy group of 4-diphosphocytidyl-2C-methyl-D-erythritol. This chain is 4-diphosphocytidyl-2-C-methyl-D-erythritol kinase, found in Francisella philomiragia subsp. philomiragia (strain ATCC 25017 / CCUG 19701 / FSC 153 / O#319-036).